The chain runs to 80 residues: Large ribosomal subunit protein bL31B (80 aa).

The protein belongs to the bacterial ribosomal protein bL31 family. Type B subfamily. In terms of assembly, part of the 50S ribosomal subunit.

The protein is Large ribosomal subunit protein bL31B of Xylella fastidiosa (strain M23).